A 166-amino-acid chain; its full sequence is Arginine repressor (166 aa).

This sequence belongs to the ArgR family.

It is found in the cytoplasm. It participates in amino-acid biosynthesis; L-arginine biosynthesis [regulation]. Functionally, regulates arginine biosynthesis genes. The chain is Arginine repressor from Mycobacterium ulcerans (strain Agy99).